The primary structure comprises 361 residues: Tyrosine--tRNA ligase (361 aa).

Residues Tyr36, Tyr162, Gln166, Asp169, and Gln184 each contribute to the L-tyrosine site. The 'KMSKS' region signature appears at 236 to 240 (KMSKS). ATP is bound at residue Lys239.

Belongs to the class-I aminoacyl-tRNA synthetase family. TyrS type 4 subfamily. In terms of assembly, homodimer.

Its subcellular location is the cytoplasm. The catalysed reaction is tRNA(Tyr) + L-tyrosine + ATP = L-tyrosyl-tRNA(Tyr) + AMP + diphosphate + H(+). Its function is as follows. Catalyzes the attachment of tyrosine to tRNA(Tyr) in a two-step reaction: tyrosine is first activated by ATP to form Tyr-AMP and then transferred to the acceptor end of tRNA(Tyr). The sequence is that of Tyrosine--tRNA ligase from Saccharolobus islandicus (strain Y.N.15.51 / Yellowstone #2) (Sulfolobus islandicus).